The sequence spans 647 residues: Threonine--tRNA ligase (647 aa).

The 61-residue stretch at 1–61 folds into the TGS domain; it reads MINITFPDGA…TEDGSIEIVT (61 aa). Positions 242–540 are catalytic; sequence DHRKLGKELD…LIENYKGAFP (299 aa). The Zn(2+) site is built by Cys336, His387, and His517.

Belongs to the class-II aminoacyl-tRNA synthetase family. As to quaternary structure, homodimer. Zn(2+) is required as a cofactor.

Its subcellular location is the cytoplasm. The catalysed reaction is tRNA(Thr) + L-threonine + ATP = L-threonyl-tRNA(Thr) + AMP + diphosphate + H(+). Catalyzes the attachment of threonine to tRNA(Thr) in a two-step reaction: L-threonine is first activated by ATP to form Thr-AMP and then transferred to the acceptor end of tRNA(Thr). Also edits incorrectly charged L-seryl-tRNA(Thr). This Streptococcus pneumoniae serotype 19F (strain G54) protein is Threonine--tRNA ligase.